A 183-amino-acid chain; its full sequence is Photosystem I assembly protein Ycf4 (183 aa).

2 helical membrane-spanning segments follow: residues 17-39 (NYLLLIIMLGGGISFFIVGFLSY) and 59-81 (FIPQGITMIFYGTMAICLSIYIY).

Belongs to the Ycf4 family.

The protein resides in the plastid. It is found in the chloroplast thylakoid membrane. Its function is as follows. Seems to be required for the assembly of the photosystem I complex. The sequence is that of Photosystem I assembly protein Ycf4 from Cyanidium caldarium (Red alga).